Consider the following 432-residue polypeptide: MTTSSNRQSSDALYQDALTHIVGGVNSPSRSFKAVGGGAPVYMERGEGAYFYDVDGNRYIDYLAAYGPIITGHAHPHIHEALMNASSKGLLYGTPHRLEVEFAKKLKQAIPSMDKVRFTNSGTEAVMTTVRVARAYTGRELVVKFSGCYHGHSDLMLIAAGSGPATLGSPDSAGVTKATAKEVITVPFNDVEAYREMMKEWGDQVACVLVEPIVGNFGIVEPKPGFLQAVNDITHEHGALVIYDEVITAFRFTYGSAQQVYGIEPDMTALGKIIGGGLPIGAYGGKAEIMETVAPLGPAYQAGTMAGNPASMATGIACLEVLEQPGVYEKLDALGAKLEAGIREAAEKHDVTITLNRLKGALTVYFTDEIVTDYEGAEKSDGEKFGRFFKLMLENGVNLAPSKYEAWFLTTEHTEQDIEETIEAVNRSFAQL.

N6-(pyridoxal phosphate)lysine is present on lysine 272.

Belongs to the class-III pyridoxal-phosphate-dependent aminotransferase family. HemL subfamily. Homodimer. Pyridoxal 5'-phosphate is required as a cofactor.

Its subcellular location is the cytoplasm. It carries out the reaction (S)-4-amino-5-oxopentanoate = 5-aminolevulinate. It participates in porphyrin-containing compound metabolism; protoporphyrin-IX biosynthesis; 5-aminolevulinate from L-glutamyl-tRNA(Glu): step 2/2. The sequence is that of Glutamate-1-semialdehyde 2,1-aminomutase 1 from Exiguobacterium sp. (strain ATCC BAA-1283 / AT1b).